Consider the following 479-residue polypeptide: NADH dehydrogenase [ubiquinone] flavoprotein 1, mitochondrial (479 aa).

NADH is bound at residue 103 to 112 (GRGGAGFPSG). Position 216-264 (216-264 (RGAGAYICGEETALIESIEGKQGKPRLKPPFPAMAGLYGCPTTVTNVET)) interacts with FMN. [4Fe-4S] cluster contacts are provided by Cys396, Cys399, Cys402, and Cys442.

The protein belongs to the complex I 51 kDa subunit family. In terms of assembly, complex I is composed of about 45 different subunits. This is a component of the flavoprotein-sulfur (FP) fragment of the enzyme. Requires FMN as cofactor. It depends on [4Fe-4S] cluster as a cofactor.

It localises to the mitochondrion inner membrane. It catalyses the reaction a ubiquinone + NADH + 5 H(+)(in) = a ubiquinol + NAD(+) + 4 H(+)(out). Functionally, core subunit of the mitochondrial membrane respiratory chain NADH dehydrogenase (Complex I) that is believed to belong to the minimal assembly required for catalysis. Complex I functions in the transfer of electrons from NADH to the respiratory chain. The immediate electron acceptor for the enzyme is believed to be ubiquinone. The chain is NADH dehydrogenase [ubiquinone] flavoprotein 1, mitochondrial (ndufv1) from Dictyostelium discoideum (Social amoeba).